Reading from the N-terminus, the 731-residue chain is Catalase-peroxidase 2 (731 aa).

Residues 1–10 are compositionally biased toward polar residues; the sequence is MAETPNSDMS. The disordered stretch occupies residues 1–26; the sequence is MAETPNSDMSGATGGRSKRPKSNQDW. A cross-link (tryptophyl-tyrosyl-methioninium (Trp-Tyr) (with M-244)) is located at residues 95-218; that stretch reads WHSAGTYRTA…LGASVMGLIY (124 aa). The active-site Proton acceptor is His96. A cross-link (tryptophyl-tyrosyl-methioninium (Tyr-Met) (with W-95)) is located at residues 218-244; the sequence is YVNPEGPDGNPDPEASAKNIRQTFDRM. Residue His259 participates in heme b binding.

As to quaternary structure, homodimer. It depends on heme b as a cofactor. In terms of processing, formation of the three residue Trp-Tyr-Met cross-link is important for the catalase, but not the peroxidase activity of the enzyme.

It carries out the reaction H2O2 + AH2 = A + 2 H2O. It catalyses the reaction 2 H2O2 = O2 + 2 H2O. Its function is as follows. Bifunctional enzyme with both catalase and broad-spectrum peroxidase activity. The protein is Catalase-peroxidase 2 of Haloarcula marismortui (strain ATCC 43049 / DSM 3752 / JCM 8966 / VKM B-1809) (Halobacterium marismortui).